The primary structure comprises 562 residues: Dihydroxy-acid dehydratase (562 aa).

Asp-80 is a binding site for Mg(2+). Cys-121 provides a ligand contact to [2Fe-2S] cluster. The Mg(2+) site is built by Asp-122 and Lys-123. At Lys-123 the chain carries N6-carboxylysine. [2Fe-2S] cluster is bound at residue Cys-194. Glu-446 is a binding site for Mg(2+). Residue Ser-472 is the Proton acceptor of the active site.

The protein belongs to the IlvD/Edd family. In terms of assembly, homodimer. Requires [2Fe-2S] cluster as cofactor. Mg(2+) is required as a cofactor.

The catalysed reaction is (2R)-2,3-dihydroxy-3-methylbutanoate = 3-methyl-2-oxobutanoate + H2O. The enzyme catalyses (2R,3R)-2,3-dihydroxy-3-methylpentanoate = (S)-3-methyl-2-oxopentanoate + H2O. The protein operates within amino-acid biosynthesis; L-isoleucine biosynthesis; L-isoleucine from 2-oxobutanoate: step 3/4. Its pathway is amino-acid biosynthesis; L-valine biosynthesis; L-valine from pyruvate: step 3/4. Its function is as follows. Functions in the biosynthesis of branched-chain amino acids. Catalyzes the dehydration of (2R,3R)-2,3-dihydroxy-3-methylpentanoate (2,3-dihydroxy-3-methylvalerate) into 2-oxo-3-methylpentanoate (2-oxo-3-methylvalerate) and of (2R)-2,3-dihydroxy-3-methylbutanoate (2,3-dihydroxyisovalerate) into 2-oxo-3-methylbutanoate (2-oxoisovalerate), the penultimate precursor to L-isoleucine and L-valine, respectively. This Macrococcus caseolyticus (strain JCSC5402) (Macrococcoides caseolyticum) protein is Dihydroxy-acid dehydratase.